The primary structure comprises 169 residues: Der GTPase-activating protein YihI (169 aa).

2 disordered regions span residues 1-83 (MNPL…PTKP) and 150-169 (DEEE…LKGN). Over residues 21-30 (NREELNAEGR) the composition is skewed to basic and acidic residues. Residues 31–40 (ARKREKKHRG) show a composition bias toward basic residues. 2 stretches are compositionally biased toward basic and acidic residues: residues 51–66 (SGDK…DPRL) and 150–161 (DEEEREEEKQDD).

The protein belongs to the YihI family. As to quaternary structure, interacts with Der.

A GTPase-activating protein (GAP) that modifies Der/EngA GTPase function. May play a role in ribosome biogenesis. The protein is Der GTPase-activating protein YihI of Photorhabdus laumondii subsp. laumondii (strain DSM 15139 / CIP 105565 / TT01) (Photorhabdus luminescens subsp. laumondii).